Consider the following 480-residue polypeptide: Docking protein 1 (480 aa).

Met-1 bears the N-acetylmethionine mark. One can recognise a PH domain in the interval 3–119 (GALMEGPLFL…WVQILCRTAF (117 aa)). Position 48 is a phosphoserine (Ser-48). Positions 151 to 259 (EGSQFWVTSQ…QQQKAQGKVG (109 aa)) constitute an IRS-type PTB domain. Over residues 253–262 (KAQGKVGQGQ) the composition is skewed to low complexity. Residues 253–328 (KAQGKVGQGQ…GSTPAGAGEG (76 aa)) are disordered. Residues 265 to 276 (TRTDSHDGETEG) are compositionally biased toward basic and acidic residues. Phosphoserine is present on residues Ser-269 and Ser-290. A phosphotyrosine mark is found at Tyr-295, Tyr-336, and Tyr-340. Tyr-361 bears the Phosphotyrosine; by INSR mark. The residue at position 376 (Tyr-376) is a Phosphotyrosine. Phosphotyrosine; by INSR is present on Tyr-397. The interval 398–480 (ELPYNPATDD…RVGVKSEGST (83 aa)) is disordered. Tyr-408 is modified (phosphotyrosine). A compositionally biased stretch (pro residues) spans 410–423 (VPPPRSSKPTPAPK). Ser-415 carries the phosphoserine modification. Low complexity predominate over residues 432-445 (SGTTAGSGSKGSDT). A compositionally biased stretch (polar residues) spans 446–455 (ALYSQVQKSG). Residue Tyr-448 is modified to Phosphotyrosine.

The protein belongs to the DOK family. Type A subfamily. In terms of assembly, interacts with RasGAP and INPP5D/SHIP1. Interacts directly with phosphorylated ITGB3. Interacts with SRMS (via the SH2 and SH3 domains). Constitutively tyrosine-phosphorylated. Phosphorylated by TEC. Phosphorylated by LYN. Phosphorylated on tyrosine residues by the insulin receptor kinase. Results in the negative regulation of the insulin signaling pathway. Phosphorylated on tyrosine residues by SRMS.

The protein localises to the cytoplasm. The protein resides in the nucleus. In terms of biological role, DOK proteins are enzymatically inert adaptor or scaffolding proteins. They provide a docking platform for the assembly of multimolecular signaling complexes. DOK1 appears to be a negative regulator of the insulin signaling pathway. Modulates integrin activation by competing with talin for the same binding site on ITGB3. In Rattus norvegicus (Rat), this protein is Docking protein 1 (Dok1).